We begin with the raw amino-acid sequence, 54 residues long: Large ribosomal subunit protein bL33 (54 aa).

It belongs to the bacterial ribosomal protein bL33 family.

The chain is Large ribosomal subunit protein bL33 from Elusimicrobium minutum (strain Pei191).